The chain runs to 99 residues: Integration host factor subunit alpha (99 aa).

This sequence belongs to the bacterial histone-like protein family. Heterodimer of an alpha and a beta chain.

Functionally, this protein is one of the two subunits of integration host factor, a specific DNA-binding protein that functions in genetic recombination as well as in transcriptional and translational control. This chain is Integration host factor subunit alpha, found in Anaeromyxobacter sp. (strain Fw109-5).